Here is a 285-residue protein sequence, read N- to C-terminus: Autophagy-related protein 27 (285 aa).

The signal sequence occupies residues 1 to 18; it reads MKVLLATALVSLLPFSSA. An MRH domain is found at 19–167; that stretch reads VECSKNEILN…VFSGPFGCLK (149 aa). Over 19-209 the chain is Lumenal; sequence VECSKNEILN…GSKPKGGAGL (191 aa). 3 disulfides stabilise this stretch: Cys-21/Cys-59, Cys-72/Cys-79, and Cys-136/Cys-165. Positions 168 to 204 are disordered; it reads KGNDNKDGNGDDDNNDKDGDDSDKKPHDGDKNGSKPK. Acidic residues predominate over residues 177-188; it reads GDDDNNDKDGDD. A compositionally biased stretch (basic and acidic residues) spans 189–200; sequence SDKKPHDGDKNG. An N-linked (GlcNAc...) asparagine glycan is attached at Asn-199. The helical transmembrane segment at 210–230 threads the bilayer; the sequence is GSWLVWLFMYATIFALIYLVV. Over 231 to 285 the chain is Cytoplasmic; it reads TSYMNTRNGSFNDFREEFVDRSTTFATNLPQFAKEVAGKIVNSGSSSQRGGYSAV.

It belongs to the ATG27 family.

It is found in the cytoplasmic vesicle membrane. The protein resides in the golgi apparatus membrane. Its subcellular location is the mitochondrion membrane. It localises to the preautophagosomal structure membrane. Functionally, effector of VPS34 phosphatidylinositol 3-phosphate kinase signaling. Regulates the cytoplasm to vacuole transport (Cvt) vesicle formation. Plays a role in ATG protein retrieval from the pre-autophagosomal structure (PAS) and is especially required for autophagy-dependent cycling of ATG9. This Kluyveromyces lactis (strain ATCC 8585 / CBS 2359 / DSM 70799 / NBRC 1267 / NRRL Y-1140 / WM37) (Yeast) protein is Autophagy-related protein 27 (ATG27).